The chain runs to 114 residues: Large ribosomal subunit protein bL20c (114 aa).

Belongs to the bacterial ribosomal protein bL20 family.

It is found in the plastid. The protein resides in the chloroplast. Functionally, binds directly to 23S ribosomal RNA and is necessary for the in vitro assembly process of the 50S ribosomal subunit. It is not involved in the protein synthesizing functions of that subunit. The polypeptide is Large ribosomal subunit protein bL20c (Tetradesmus obliquus (Green alga)).